A 249-amino-acid chain; its full sequence is tRNA (guanine-N(1)-)-methyltransferase (249 aa).

Residues G113 and 133–138 (IGDFVL) contribute to the S-adenosyl-L-methionine site.

The protein belongs to the RNA methyltransferase TrmD family. Homodimer.

The protein localises to the cytoplasm. The enzyme catalyses guanosine(37) in tRNA + S-adenosyl-L-methionine = N(1)-methylguanosine(37) in tRNA + S-adenosyl-L-homocysteine + H(+). Its function is as follows. Specifically methylates guanosine-37 in various tRNAs. The polypeptide is tRNA (guanine-N(1)-)-methyltransferase (Photobacterium profundum (strain SS9)).